Here is a 535-residue protein sequence, read N- to C-terminus: Arylsulfatase K (535 aa).

Residues 1–22 (MLLLWLSVFAASALAAPDRGAG) form the signal peptide. Residues aspartate 44 and cysteine 84 each contribute to the Ca(2+) site. Catalysis depends on cysteine 84, which acts as the Nucleophile. The residue at position 84 (cysteine 84) is a 3-oxoalanine (Cys). Asparagine 112 carries N-linked (GlcNAc...) asparagine glycosylation. Substrate is bound at residue lysine 132. Asparagine 197 carries N-linked (GlcNAc...) asparagine glycosylation. Residue histidine 255 participates in substrate binding. A glycan (N-linked (GlcNAc...) asparagine) is linked at asparagine 266. Positions 317 and 318 each coordinate Ca(2+). N-linked (GlcNAc...) asparagine glycans are attached at residues asparagine 379, asparagine 417, and asparagine 502.

The protein belongs to the sulfatase family. Requires Ca(2+) as cofactor. In terms of processing, the conversion to 3-oxoalanine (also known as C-formylglycine, FGly), of a serine or cysteine residue in prokaryotes and of a cysteine residue in eukaryotes, is critical for catalytic activity. Post-translationally, the 75-kDa precursor undergoes proteolytic processing to yield a 23 kDa form. N-glycosylated with both high mannose and complex type sugars.

The protein localises to the secreted. It is found in the lysosome. The enzyme catalyses an aryl sulfate + H2O = a phenol + sulfate + H(+). The catalysed reaction is Hydrolysis of the 2-sulfate groups of the 2-O-sulfo-D-glucuronate residues of chondroitin sulfate, heparin and heparitin sulfate.. Its function is as follows. Catalyzes the hydrolysis of pseudosubstrates such as p-nitrocatechol sulfate and p-nitrophenyl sulfate. Catalyzes the hydrolysis of the 2-sulfate groups of the 2-O-sulfo-D-glucuronate residues of chondroitin sulfate, heparin and heparitin sulfate. Acts selectively on 2-sulfoglucuronate and lacks activity against 2-sulfoiduronate. The chain is Arylsulfatase K (ARSK) from Canis lupus familiaris (Dog).